The sequence spans 98 residues: Cystatin-B (98 aa).

At Met1 the chain carries N-acetylmethionine. The Secondary area of contact signature appears at 46–50; sequence QVVAG.

The protein belongs to the cystatin family.

Its subcellular location is the cytoplasm. Its function is as follows. This is an intracellular thiol proteinase inhibitor. The protein is Cystatin-B (CSTB) of Sus scrofa (Pig).